We begin with the raw amino-acid sequence, 434 residues long: Gamma-glutamyl phosphate reductase (434 aa).

The protein belongs to the gamma-glutamyl phosphate reductase family.

The protein localises to the cytoplasm. The enzyme catalyses L-glutamate 5-semialdehyde + phosphate + NADP(+) = L-glutamyl 5-phosphate + NADPH + H(+). Its pathway is amino-acid biosynthesis; L-proline biosynthesis; L-glutamate 5-semialdehyde from L-glutamate: step 2/2. Functionally, catalyzes the NADPH-dependent reduction of L-glutamate 5-phosphate into L-glutamate 5-semialdehyde and phosphate. The product spontaneously undergoes cyclization to form 1-pyrroline-5-carboxylate. The protein is Gamma-glutamyl phosphate reductase of Nostoc sp. (strain PCC 7120 / SAG 25.82 / UTEX 2576).